Consider the following 159-residue polypeptide: Calcium-binding protein CML39 (159 aa).

EF-hand domains lie at 18-53 (EKNR…LGEQ), 54-89 (MSDE…NDEF), 93-128 (EKKR…LGES), and 129-159 (RTTD…LMMR). 10 residues coordinate Ca(2+): aspartate 31, asparagine 33, aspartate 35, arginine 37, glutamate 42, aspartate 67, aspartate 69, aspartate 71, methionine 73, and glutamate 78. 4 residues coordinate Ca(2+): aspartate 142, asparagine 144, aspartate 146, and glutamate 153.

Expressed in the zones of elongation and differentiation in seedling roots and at the root-hypocotyl junction. Expressed from stage 12 of flower development in anthers, specifically in pollen.

In terms of biological role, potential calcium sensor that binds calcium in vitro. The polypeptide is Calcium-binding protein CML39 (CML39) (Arabidopsis thaliana (Mouse-ear cress)).